Reading from the N-terminus, the 263-residue chain is Outer membrane protein OmpK (263 aa).

The first 20 residues, 1–20 (MRKSLLALSLLAATSAPVLA), serve as a signal peptide directing secretion.

It belongs to the nucleoside-specific channel-forming outer membrane porin (Tsx) (TC 1.B.10) family.

It localises to the cell outer membrane. Serves as receptor for a broad-host-range vibriophage, KVP40. This Vibrio parahaemolyticus protein is Outer membrane protein OmpK.